Consider the following 494-residue polypeptide: Metalloprotease TIKI1 (494 aa).

The first 25 residues, 1–25 (MTMMTMMMVSWSAFLQICWILMVRA), serve as a signal peptide directing secretion. The Extracellular segment spans residues 26-467 (NQFNPGEPSG…QEHERANHDR (442 aa)). N-linked (GlcNAc...) asparagine glycosylation is found at asparagine 234 and asparagine 282. Residues 468–488 (TFSGSSSRTGPALSALAVCVQ) traverse the membrane as a helical segment. Residues 489 to 494 (MLRLLL) lie on the Cytoplasmic side of the membrane.

Belongs to the TIKI family. It depends on Mn(2+) as a cofactor. The cofactor is Co(2+).

The protein localises to the cell membrane. Metalloprotease that acts as a negative regulator of the Wnt signaling pathway by mediating the cleavage of the N-terminal residues of a subset of Wnt proteins. Following cleavage, Wnt proteins become oxidized and form large disulfide-bond oligomers, leading to their inactivation. The polypeptide is Metalloprotease TIKI1 (trabd2a) (Danio rerio (Zebrafish)).